The primary structure comprises 188 residues: MTDDLEPTAPAAAAPEPEVKGIDLARRALEEARAAAKASGKSVGQGRRSGTGVRALRARRRRGWSGPGPDDRDPQPFGALTNAIAKQRGWSPKVSEGTVLGRWVQVVGEDIAAHAEPTGLRDGILSVSAESTAWATQLRMMQSQILAKIAAAVGDGVVKSLRITGPTAPSWRKGERHIRGRGPRDTYG.

Disordered stretches follow at residues 1 to 20, 31 to 78, and 166 to 188; these read MTDDLEPTAPAAAAPEPEVK, EARA…QPFG, and PTAPSWRKGERHIRGRGPRDTYG. Positions 7-16 are enriched in low complexity; the sequence is PTAPAAAAPE.

This sequence belongs to the UPF0232 family.

In Rhodococcus jostii (strain RHA1), this protein is UPF0232 protein RHA1_ro03670.